The sequence spans 274 residues: Putative pyruvate, phosphate dikinase regulatory protein (274 aa).

An ADP-binding site is contributed by 149 to 156 (GVSRSSKT).

It belongs to the pyruvate, phosphate/water dikinase regulatory protein family. PDRP subfamily.

The catalysed reaction is N(tele)-phospho-L-histidyl/L-threonyl-[pyruvate, phosphate dikinase] + ADP = N(tele)-phospho-L-histidyl/O-phospho-L-threonyl-[pyruvate, phosphate dikinase] + AMP + H(+). It carries out the reaction N(tele)-phospho-L-histidyl/O-phospho-L-threonyl-[pyruvate, phosphate dikinase] + phosphate + H(+) = N(tele)-phospho-L-histidyl/L-threonyl-[pyruvate, phosphate dikinase] + diphosphate. Functionally, bifunctional serine/threonine kinase and phosphorylase involved in the regulation of the pyruvate, phosphate dikinase (PPDK) by catalyzing its phosphorylation/dephosphorylation. The sequence is that of Putative pyruvate, phosphate dikinase regulatory protein from Rhizorhabdus wittichii (strain DSM 6014 / CCUG 31198 / JCM 15750 / NBRC 105917 / EY 4224 / RW1) (Sphingomonas wittichii).